The chain runs to 315 residues: Ribosomal RNA small subunit methyltransferase H (315 aa).

Residues 33–35 (GGH), aspartate 52, phenylalanine 84, aspartate 106, and glutamine 113 contribute to the S-adenosyl-L-methionine site. The interval 295–315 (SDELEENNRSHSAKLRVAEKL) is disordered.

Belongs to the methyltransferase superfamily. RsmH family.

It localises to the cytoplasm. The enzyme catalyses cytidine(1402) in 16S rRNA + S-adenosyl-L-methionine = N(4)-methylcytidine(1402) in 16S rRNA + S-adenosyl-L-homocysteine + H(+). Its function is as follows. Specifically methylates the N4 position of cytidine in position 1402 (C1402) of 16S rRNA. The protein is Ribosomal RNA small subunit methyltransferase H of Lactobacillus gasseri (strain ATCC 33323 / DSM 20243 / BCRC 14619 / CIP 102991 / JCM 1131 / KCTC 3163 / NCIMB 11718 / NCTC 13722 / AM63).